A 656-amino-acid chain; its full sequence is Putative cysteine-rich receptor-like protein kinase 32 (656 aa).

The N-terminal stretch at 1–23 (MCLQNLLSILCFVLAISFGYVSA) is a signal peptide. Gnk2-homologous domains lie at 24 to 126 (QKCV…NSSF) and 134 to 238 (PTMV…GSEY). The Extracellular segment spans residues 24-262 (QKCVDSMFFR…PDGKTISTGA (239 aa)). 5 N-linked (GlcNAc...) asparagine glycosylation sites follow: Asn-35, Asn-52, Asn-61, Asn-103, and Asn-123. A helical transmembrane segment spans residues 263–283 (IVAVVVSVVIFVVLLALVLVI). At 284–656 (RKRRQSYKTL…SASITRVTPR (373 aa)) the chain is on the cytoplasmic side. Positions 321–606 (FSRNNKLGKG…IFQMLTNSSI (286 aa)) constitute a Protein kinase domain. ATP is bound by residues 327-335 (LGKGGFGEV) and Lys-349. The residue at position 394 (Tyr-394) is a Phosphotyrosine. Catalysis depends on Asp-454, which acts as the Proton acceptor. Ser-458 carries the post-translational modification Phosphoserine. Thr-494 bears the Phosphothreonine mark. The residue at position 502 (Tyr-502) is a Phosphotyrosine.

Belongs to the protein kinase superfamily. Ser/Thr protein kinase family. CRK subfamily.

It localises to the membrane. It catalyses the reaction L-seryl-[protein] + ATP = O-phospho-L-seryl-[protein] + ADP + H(+). The enzyme catalyses L-threonyl-[protein] + ATP = O-phospho-L-threonyl-[protein] + ADP + H(+). This is Putative cysteine-rich receptor-like protein kinase 32 (CRK32) from Arabidopsis thaliana (Mouse-ear cress).